The primary structure comprises 149 residues: D-aminoacyl-tRNA deacylase (149 aa).

The Gly-cisPro motif, important for rejection of L-amino acids motif lies at 137 to 138 (GP).

This sequence belongs to the DTD family. In terms of assembly, homodimer.

It localises to the cytoplasm. The enzyme catalyses glycyl-tRNA(Ala) + H2O = tRNA(Ala) + glycine + H(+). It catalyses the reaction a D-aminoacyl-tRNA + H2O = a tRNA + a D-alpha-amino acid + H(+). Its function is as follows. An aminoacyl-tRNA editing enzyme that deacylates mischarged D-aminoacyl-tRNAs. Also deacylates mischarged glycyl-tRNA(Ala), protecting cells against glycine mischarging by AlaRS. Acts via tRNA-based rather than protein-based catalysis; rejects L-amino acids rather than detecting D-amino acids in the active site. By recycling D-aminoacyl-tRNA to D-amino acids and free tRNA molecules, this enzyme counteracts the toxicity associated with the formation of D-aminoacyl-tRNA entities in vivo and helps enforce protein L-homochirality. The chain is D-aminoacyl-tRNA deacylase from Clostridium kluyveri (strain ATCC 8527 / DSM 555 / NBRC 12016 / NCIMB 10680 / K1).